The chain runs to 233 residues: Phosphoribosylaminoimidazole-succinocarboxamide synthase (233 aa).

This sequence belongs to the SAICAR synthetase family.

The enzyme catalyses 5-amino-1-(5-phospho-D-ribosyl)imidazole-4-carboxylate + L-aspartate + ATP = (2S)-2-[5-amino-1-(5-phospho-beta-D-ribosyl)imidazole-4-carboxamido]succinate + ADP + phosphate + 2 H(+). It functions in the pathway purine metabolism; IMP biosynthesis via de novo pathway; 5-amino-1-(5-phospho-D-ribosyl)imidazole-4-carboxamide from 5-amino-1-(5-phospho-D-ribosyl)imidazole-4-carboxylate: step 1/2. This chain is Phosphoribosylaminoimidazole-succinocarboxamide synthase, found in Thermococcus sibiricus (strain DSM 12597 / MM 739).